A 298-amino-acid chain; its full sequence is Cyclin-dependent kinase 1 (298 aa).

Position 2 is an N-acetylserine (S2). Residues 8-295 (YKRLEKVGEG…ARRAAIHPYF (288 aa)) enclose the Protein kinase domain. ATP is bound by residues 14–22 (VGEGTYGVV) and K40. Residue Y19 is modified to Phosphotyrosine. D136 functions as the Proton acceptor in the catalytic mechanism. T169 is modified (phosphothreonine).

This sequence belongs to the protein kinase superfamily. CMGC Ser/Thr protein kinase family. CDC2/CDKX subfamily. In terms of assembly, forms a stable but non-covalent complex with the CKS1 protein and with a cyclin.

It catalyses the reaction L-seryl-[protein] + ATP = O-phospho-L-seryl-[protein] + ADP + H(+). The catalysed reaction is L-threonyl-[protein] + ATP = O-phospho-L-threonyl-[protein] + ADP + H(+). With respect to regulation, phosphorylation at Thr-18 or Tyr-19 inactivates the enzyme, while phosphorylation at Thr-169 activates it. Its function is as follows. Cyclin-dependent kinase that acts as a master regulator of the mitotic and meiotic cell cycles. Required to drive the G1-S transition. More than 200 substrates have been identified. Substrate specificity is in part regulated by the bound cyclin protein. Phosphorylates YTA7 during S-phase to promote transcription of histones. May phosphorylate CNN1, to contribute to the enrichment of CNN1 on anaphase kinetochores. This is Cyclin-dependent kinase 1 from Saccharomyces cerevisiae (strain ATCC 204508 / S288c) (Baker's yeast).